The primary structure comprises 355 residues: Trans-3-hydroxy-L-proline dehydratase (355 aa).

Cys-111 acts as the Proton acceptor in catalysis. Residues 112–113 (GH) and 276–277 (GS) contribute to the substrate site.

The protein belongs to the proline racemase family. Homodimer.

The catalysed reaction is trans-3-hydroxy-L-proline = 1-pyrroline-2-carboxylate + H2O. Functionally, catalyzes the dehydration of trans-3-hydroxy-L-proline (t3LHyp) to Delta(1)-pyrroline-2-carboxylate (Pyr2C). Together with LhpI, is involved in a metabolic pathway that converts t3LHyp to L-proline. This is Trans-3-hydroxy-L-proline dehydratase from Colwellia psychrerythraea (strain 34H / ATCC BAA-681) (Vibrio psychroerythus).